A 252-amino-acid polypeptide reads, in one-letter code: Phosphoglycolate phosphatase (252 aa).

D13 acts as the Nucleophile in catalysis. The Mg(2+) site is built by D13, D15, and D192.

This sequence belongs to the HAD-like hydrolase superfamily. CbbY/CbbZ/Gph/YieH family. As to quaternary structure, monomer. Requires Mg(2+) as cofactor. Chloride is required as a cofactor.

It catalyses the reaction 2-phosphoglycolate + H2O = glycolate + phosphate. It participates in organic acid metabolism; glycolate biosynthesis; glycolate from 2-phosphoglycolate: step 1/1. Functionally, specifically catalyzes the dephosphorylation of 2-phosphoglycolate. Is involved in the dissimilation of the intracellular 2-phosphoglycolate formed during the DNA repair of 3'-phosphoglycolate ends, a major class of DNA lesions induced by oxidative stress. This Salmonella paratyphi A (strain ATCC 9150 / SARB42) protein is Phosphoglycolate phosphatase.